The chain runs to 217 residues: Claudin-9 (217 aa).

At 1–12 (MASTGLELLGMT) the chain is on the cytoplasmic side. Residues 13–33 (LAVLGWLGTLVSCALPLWKVT) traverse the membrane as a helical segment. At 34–81 (AFIGNSIVVAQVVWEGLWMSCVVQSTGQMQCKVYDSLLALPQDLQAAR) the chain is on the extracellular side. A helical membrane pass occupies residues 82 to 102 (ALCVVALLLALLGLLVAITGA). Residues 103 to 116 (QCTTCVEDEGAKAR) are Cytoplasmic-facing. A helical membrane pass occupies residues 117 to 137 (IVLTAGVLLLLSGILVLIPVC). The Extracellular segment spans residues 138-159 (WTAHAIIQDFYNPLVAEALKRE). Residues 160-180 (LGASLYLGWAAAALLMLGGGL) form a helical membrane-spanning segment. At 181–217 (LCCTCPPSHFERPRGPRLGYSIPSRSGASGLDKRDYV) the chain is on the cytoplasmic side.

This sequence belongs to the claudin family. As to quaternary structure, interacts with CLDN1, CD81 and OCLN.

It is found in the cell junction. It localises to the tight junction. The protein localises to the cell membrane. Its function is as follows. Plays a major role in tight junction-specific obliteration of the intercellular space, through calcium-independent cell-adhesion activity. This chain is Claudin-9 (Cldn9), found in Mus musculus (Mouse).